Here is a 68-residue protein sequence, read N- to C-terminus: Protein transport protein Sec61 subunit gamma (68 aa).

At 1 to 32 the chain is on the cytoplasmic side; sequence MDQVTKFIEPGRQFAKDSIRLVKRCTKPDRKE. The helical transmembrane segment at 33-61 threads the bilayer; the sequence is FQKIAVATAIGFCIMGFIGFFVKLIHIPI. Residues 62-68 lie on the Extracellular side of the membrane; sequence NNIIVGS.

This sequence belongs to the SecE/SEC61-gamma family. As to quaternary structure, heterotrimeric complex composed of SEC61-alpha, SEC61-beta and SEC61-gamma.

The protein resides in the endoplasmic reticulum membrane. Necessary for protein translocation in the endoplasmic reticulum. This is Protein transport protein Sec61 subunit gamma (SEC61G) from Gryllotalpa orientalis (Oriental mole cricket).